We begin with the raw amino-acid sequence, 178 residues long: Caveolin-1 (178 aa).

Serine 2 is modified (N-acetylserine). Phosphoserine is present on serine 2. The segment at 2 to 94 (SGGKYVDAEG…WKASFTTFTV (93 aa)) is required for homooligomerization. At 2–104 (SGGKYVDAEG…TKYWFYRLLS (103 aa)) the chain is on the cytoplasmic side. Position 5 is an N6-acetyllysine; alternate (lysine 5). Lysine 5 participates in a covalent cross-link: Glycyl lysine isopeptide (Lys-Gly) (interchain with G-Cter in ubiquitin); alternate. Tyrosine 6 bears the Phosphotyrosine mark. Tyrosine 14 carries the post-translational modification Phosphotyrosine; by ABL1. Residue tyrosine 25 is modified to Phosphotyrosine. Residues lysine 26, lysine 30, lysine 39, lysine 47, and lysine 57 each participate in a glycyl lysine isopeptide (Lys-Gly) (interchain with G-Cter in ubiquitin) cross-link. Residues 82 to 94 (DGIWKASFTTFTV) are interaction with CAVIN3. Positions 105–125 (ALLGIPLALLWGIYFAILSFL) form an intramembrane region, helical. At 126–178 (HIWAVVPCIRSYLIEIQCISRVYSICIHTFCDPLFEAIGKVFSNIRATVQKEI) the chain is on the cytoplasmic side. Positions 131-142 (VPCIRSYLIEIQ) are interacts with SPRY1, SPRY2, SPRY3 and SPRY4. Residues cysteine 133, cysteine 143, and cysteine 156 are each lipidated (S-palmitoyl cysteine). An interacts with SPRY1, SPRY2, and SPRY4 region spans residues 149–160 (SICIHTFCDPLF). The segment at 167 to 178 (FSNIRATVQKEI) is interacts with SPRY1, SPRY2, SPRY3 and SPRY4.

The protein belongs to the caveolin family. In terms of assembly, homooligomer. Interacts with GLIPR2. Interacts with NOSTRIN. Interacts with SNAP25 and STX1A. Interacts (via the N-terminus) with DPP4; the interaction is direct. Interacts with CTNNB1, CDH1 and JUP. Interacts with PACSIN2; this interaction induces membrane tubulation. Interacts with SLC7A9. Interacts with BMX and BTK. Interacts with TGFBR1. Interacts with CAVIN3 (via leucine-zipper domain) in a cholesterol-sensitive manner. Interacts with CAVIN1. Interacts with EHD2 in a cholesterol-dependent manner. Forms a ternary complex with UBXN6 and VCP; mediates CAV1 targeting to lysosomes for degradation. Interacts with ABCG1; this interaction regulates ABCG1-mediated cholesterol efflux. Interacts with NEU3; this interaction enhances NEU3 sialidase activity within caveola. Interacts (via C-terminus) with SPRY1, SPRY2 (via C-terminus), SPRY3, and SPRY4. Interacts with IGFBP5; this interaction allows trafficking of IGFBP5 from the plasma membrane to the nucleus. Phosphorylated at Tyr-14 by ABL1 in response to oxidative stress. Post-translationally, ubiquitinated. Undergo monoubiquitination and multi- and/or polyubiquitination. Monoubiquitination of N-terminal lysines promotes integration in a ternary complex with UBXN6 and VCP which promotes oligomeric CAV1 targeting to lysosomes for degradation. Ubiquitinated by ZNRF1; leading to degradation and modulation of the TLR4-mediated immune response.

It localises to the golgi apparatus membrane. The protein resides in the cell membrane. It is found in the membrane. Its subcellular location is the caveola. The protein localises to the membrane raft. In terms of biological role, may act as a scaffolding protein within caveolar membranes. Forms a stable heterooligomeric complex with CAV2 that targets to lipid rafts and drives caveolae formation. Mediates the recruitment of CAVIN proteins (CAVIN1/2/3/4) to the caveolae. Interacts directly with G-protein alpha subunits and can functionally regulate their activity. Involved in the costimulatory signal essential for T-cell receptor (TCR)-mediated T-cell activation. Its binding to DPP4 induces T-cell proliferation and NF-kappa-B activation in a T-cell receptor/CD3-dependent manner. Recruits CTNNB1 to caveolar membranes and may regulate CTNNB1-mediated signaling through the Wnt pathway. Negatively regulates TGFB1-mediated activation of SMAD2/3 by mediating the internalization of TGFBR1 from membrane rafts leading to its subsequent degradation. Binds 20(S)-hydroxycholesterol (20(S)-OHC). This Ornithorhynchus anatinus (Duckbill platypus) protein is Caveolin-1 (CAV1).